The primary structure comprises 784 residues: Lon protease (784 aa).

Residues 6 to 207 (LPLMALRDMV…TVITTLTSNI (202 aa)) form the Lon N-terminal domain. 356-363 (GPPGVGKT) is a binding site for ATP. The 182-residue stretch at 592 to 773 (EDQIGSTTGL…DQVLKHALVE (182 aa)) folds into the Lon proteolytic domain. Catalysis depends on residues S679 and K722.

This sequence belongs to the peptidase S16 family. Homohexamer. Organized in a ring with a central cavity.

It localises to the cytoplasm. The catalysed reaction is Hydrolysis of proteins in presence of ATP.. Functionally, ATP-dependent serine protease that mediates the selective degradation of mutant and abnormal proteins as well as certain short-lived regulatory proteins. Required for cellular homeostasis and for survival from DNA damage and developmental changes induced by stress. Degrades polypeptides processively to yield small peptide fragments that are 5 to 10 amino acids long. Binds to DNA in a double-stranded, site-specific manner. The protein is Lon protease of Rickettsia prowazekii (strain Madrid E).